An 83-amino-acid polypeptide reads, in one-letter code: MVTIRLARGGSKKRPFYHLTVTNSRNARDGRFVERIGFFNPVATGGEVRLSVDQERATYWLGQGAQPSERVAQLLKDAAKANA.

The protein belongs to the bacterial ribosomal protein bS16 family.

The polypeptide is Small ribosomal subunit protein bS16 (Pseudomonas aeruginosa (strain LESB58)).